Reading from the N-terminus, the 1288-residue chain is Probable serine/threonine-protein kinase drkD (1288 aa).

Polar residues predominate over residues 1–12 (MEGSFQFNKSKQ). Disordered regions lie at residues 1 to 132 (MEGS…QYHP), 156 to 223 (FNVS…PEEI), and 269 to 386 (SFGH…DDEE). Low complexity-rich tracts occupy residues 13-79 (TNNN…NSTS) and 156-220 (FNVS…QQQP). A coiled-coil region spans residues 221 to 248 (EEIEGELNRERQERDKMLHEEAEIEQYK). The segment covering 271–291 (GHITSANSDETTNNESGSPIN) has biased composition (polar residues). Over residues 302 to 343 (PHSSHNEDHQSDQDNHGQFMNDEHQSTDDDQNKSDNEKESES) the composition is skewed to basic and acidic residues. The segment covering 344–354 (ARNSGDLQQKV) has biased composition (polar residues). Over residues 376–386 (EGEEEDDDDEE) the composition is skewed to acidic residues. LRR repeat units follow at residues 400–421 (KSTK…VWSI), 423–444 (ELRD…IGLL), 446–468 (HLKR…YSLP), 469–490 (RLTT…INRL), 492–513 (SLKT…TNLH), 517–538 (NLVE…MLES), and 540–561 (HLQV…LKKS). Disordered regions lie at residues 690 to 717 (WDQQ…VLTG), 733 to 764 (PTQQ…QQQQ), and 796 to 825 (QQQQ…KDHQ). Composition is skewed to polar residues over residues 701–717 (SPNV…VLTG) and 733–757 (PTQQ…HNNN). Residues 851-1104 (IAIGARIGRG…EILPIMEGMI (254 aa)) enclose the Protein kinase domain. ATP-binding positions include 857 to 865 (IGRGGYGQV) and Lys-878. Asp-974 serves as the catalytic Proton acceptor. Disordered stretches follow at residues 1118–1141 (GRPI…QNMA) and 1245–1288 (QQQL…NDKK). The segment covering 1257–1268 (NRLNYNFNNSNN) has biased composition (low complexity). Over residues 1269-1282 (SDIQPMQQENNYRM) the composition is skewed to polar residues.

The protein belongs to the protein kinase superfamily. TKL Ser/Thr protein kinase family.

It carries out the reaction L-seryl-[protein] + ATP = O-phospho-L-seryl-[protein] + ADP + H(+). The catalysed reaction is L-threonyl-[protein] + ATP = O-phospho-L-threonyl-[protein] + ADP + H(+). The polypeptide is Probable serine/threonine-protein kinase drkD (drkD) (Dictyostelium discoideum (Social amoeba)).